The chain runs to 337 residues: Ferredoxin--NADP reductase (337 aa).

7 residues coordinate FAD: Asp35, Gln43, Tyr48, Val88, Phe123, Asp289, and Thr330.

The protein belongs to the ferredoxin--NADP reductase type 2 family. In terms of assembly, homodimer. FAD is required as a cofactor.

It catalyses the reaction 2 reduced [2Fe-2S]-[ferredoxin] + NADP(+) + H(+) = 2 oxidized [2Fe-2S]-[ferredoxin] + NADPH. The sequence is that of Ferredoxin--NADP reductase from Paramagnetospirillum magneticum (strain ATCC 700264 / AMB-1) (Magnetospirillum magneticum).